The chain runs to 183 residues: MDIDPYKEFGATVELLSFLPSDFFPSVRDLLDTASALYREALESPEHCSPHHTALRQAILCWGELMTLATWVGVNLEDPASRDLVVSYVNTNMGLKFRQLLWFHISCLTFGRETVIEYLVAFGVWIRTPPAYRPPNAPILSTLPETTVVRRRGRSPRRRTPSPRRRRSQSPRRRRSQSRESQC.

The segment at 136–183 (NAPILSTLPETTVVRRRGRSPRRRTPSPRRRRSQSPRRRRSQSRESQC) is disordered. A compositionally biased stretch (basic residues) spans 149–176 (VRRRGRSPRRRTPSPRRRRSQSPRRRRS). Residues Ser-155, Ser-162, and Ser-170 each carry the phosphoserine; by host modification. The 1; half-length repeat unit spans residues 155-161 (SPRRRTP). Positions 155-177 (SPRRRTPSPRRRRSQSPRRRRSQ) are 3 X 8 AA repeats of S-P-R-R-R-[PR]-S-Q. The Bipartite nuclear localization signal signature appears at 158–175 (RRTPSPRRRRSQSPRRRR). 2 consecutive repeat copies span residues 162-169 (SPRRRRSQ) and 170-177 (SPRRRRSQ). The interval 177–183 (QSRESQC) is RNA binding.

Belongs to the orthohepadnavirus core antigen family. Homodimerizes, then multimerizes. Interacts with cytosol exposed regions of viral L glycoprotein present in the reticulum-to-Golgi compartment. Interacts with human FLNB. Phosphorylated form interacts with host importin alpha; this interaction depends on the exposure of the NLS, which itself depends upon genome maturation and/or phosphorylation of the capsid protein. Interacts with host NUP153. In terms of processing, phosphorylated by host SRPK1, SRPK2, and maybe protein kinase C or GAPDH. Phosphorylation is critical for pregenomic RNA packaging. Protein kinase C phosphorylation is stimulated by HBx protein and may play a role in transport of the viral genome to the nucleus at the late step during the viral replication cycle.

Its subcellular location is the virion. It is found in the host cytoplasm. Self assembles to form an icosahedral capsid. Most capsids appear to be large particles with an icosahedral symmetry of T=4 and consist of 240 copies of capsid protein, though a fraction forms smaller T=3 particles consisting of 180 capsid proteins. Entering capsids are transported along microtubules to the nucleus. Phosphorylation of the capsid is thought to induce exposure of nuclear localization signal in the C-terminal portion of the capsid protein that allows binding to the nuclear pore complex via the importin (karyopherin-) alpha and beta. Capsids are imported in intact form through the nuclear pore into the nuclear basket, where it probably binds NUP153. Only capsids that contain the mature viral genome can release the viral DNA and capsid protein into the nucleoplasm. Immature capsids get stuck in the basket. Capsids encapsulate the pre-genomic RNA and the P protein. Pre-genomic RNA is reverse-transcribed into DNA while the capsid is still in the cytoplasm. The capsid can then either be directed to the nucleus, providing more genomes for transcription, or bud through the endoplasmic reticulum to provide new virions. This Hepatitis B virus genotype D subtype ayw (isolate Italy/CI/1992) (HBV-D) protein is Capsid protein.